The primary structure comprises 310 residues: Methionyl-tRNA formyltransferase (310 aa).

109-112 (SLLP) serves as a coordination point for (6S)-5,6,7,8-tetrahydrofolate.

The protein belongs to the Fmt family.

It catalyses the reaction L-methionyl-tRNA(fMet) + (6R)-10-formyltetrahydrofolate = N-formyl-L-methionyl-tRNA(fMet) + (6S)-5,6,7,8-tetrahydrofolate + H(+). Its function is as follows. Attaches a formyl group to the free amino group of methionyl-tRNA(fMet). The formyl group appears to play a dual role in the initiator identity of N-formylmethionyl-tRNA by promoting its recognition by IF2 and preventing the misappropriation of this tRNA by the elongation apparatus. This is Methionyl-tRNA formyltransferase from Pseudomonas putida (strain GB-1).